The chain runs to 351 residues: DNA nickase (351 aa).

Fe cation contacts are provided by His241, Glu245, and His303.

Its function is as follows. Acts as a DNA nickase. The polypeptide is DNA nickase (Nostoc sp. (strain PCC 7120 / SAG 25.82 / UTEX 2576)).